A 548-amino-acid polypeptide reads, in one-letter code: uncharacterized protein (548 aa).

Short-chain dehydrogenase/reductase stretches follow at residues 1–250 (MDDR…WMSV) and 271–548 (PVED…LLSP). 12 to 37 (IVVTGAAGGIGRALVDIFAANGDVVV) lines the NADP(+) pocket. S141 is a substrate binding site. Y154 (proton acceptor) is an active-site residue. 280–304 (VIVMGGATGVGAAIARRFAENGDTV) is a binding site for NADP(+). Y420 acts as the Proton acceptor in catalysis.

This sequence belongs to the short-chain dehydrogenases/reductases (SDR) family.

This is an uncharacterized protein from Sinorhizobium fredii (strain NBRC 101917 / NGR234).